We begin with the raw amino-acid sequence, 265 residues long: HUWE1-associated protein modifying stress responses (265 aa).

4 disordered regions span residues 1–22 (MEDK…HWFS), 145–170 (RNSR…GSSV), 195–218 (VRSS…RRNG), and 240–265 (GTRK…NRMI). Polar residues-rich tracts occupy residues 156–170 (VSPN…GSSV) and 195–212 (VRSS…SSNT).

The protein belongs to the TAPR1 family. In terms of assembly, oligomer.

It is found in the nucleus. It localises to the cytoplasm. Its function is as follows. Acts as a central player within a network of stress response pathways promoting cellular adaptability. Functions as a negative regulator of TP53/P53 in the cellular response to telomere erosion and probably also DNA damage. The chain is HUWE1-associated protein modifying stress responses from Xenopus laevis (African clawed frog).